The chain runs to 343 residues: Lactamase-like protein nscB (343 aa).

The Zn(2+) site is built by histidine 118, histidine 120, aspartate 122, and histidine 123. Aspartate 122 (proton donor/acceptor) is an active-site residue.

Belongs to the metallo-beta-lactamase superfamily. Requires Zn(2+) as cofactor.

It functions in the pathway secondary metabolite biosynthesis. Functionally, lactamase-like protein; part of the gene cluster that mediates the biosynthesis of neosartoricin B, a prenylated anthracenone that probably exhibits T-cell antiproliferative activity, suggestive of a physiological role as an immunosuppressive agent. The non-reducing polyketide synthase nscA probably synthesizes and cyclizes the decaketide backbone. The hydrolase nscB then mediates the product release through hydrolysis followed by spontaneous decarboxylation. The prenyltransferase nscD catalyzes the addition of the dimethylallyl group to the aromatic C5. The FAD-dependent monooxygenase nscC is then responsible for the stereospecific hydroxylation at C2. Neosartoricin B can be converted into two additional compounds neosartoricins C and D. Neosartoricin C is a spirocyclic compound that is cyclized through the attack of C3 hydroxyl on C14, followed by dehydration. On the other hand, neosartoricin D is a further cyclized compound in which attack of C2 on C14 in neosartoricin C results in the formation of the acetal-containing dioxabicyclo-octanone ring. Both of these compounds are novel and possibly represent related metabolites of the gene cluster. In Arthroderma otae (strain ATCC MYA-4605 / CBS 113480) (Microsporum canis), this protein is Lactamase-like protein nscB.